A 101-amino-acid polypeptide reads, in one-letter code: Small ribosomal subunit protein uS14 (101 aa).

Belongs to the universal ribosomal protein uS14 family. As to quaternary structure, part of the 30S ribosomal subunit. Contacts proteins S3 and S10.

Functionally, binds 16S rRNA, required for the assembly of 30S particles and may also be responsible for determining the conformation of the 16S rRNA at the A site. This is Small ribosomal subunit protein uS14 from Ralstonia pickettii (strain 12J).